The following is a 170-amino-acid chain: Cytochrome c-type biogenesis protein CcmE (170 aa).

Topologically, residues 1–7 are cytoplasmic; that stretch reads MTRKQRR. The chain crosses the membrane as a helical; Signal-anchor for type II membrane protein span at residues 8-28; the sequence is LTIIGGALFVLAVAAGLVLNA. At 29–170 the chain is on the periplasmic side; it reads LRDSIVFFST…GEKTAAGATQ (142 aa). Positions 122 and 126 each coordinate heme. A compositionally biased stretch (basic and acidic residues) spans 137–146; sequence KQGHWKDDYG. Positions 137–170 are disordered; sequence KQGHWKDDYGKPQAAKPGPVSMREGEKTAAGATQ.

It belongs to the CcmE/CycJ family.

Its subcellular location is the cell inner membrane. Heme chaperone required for the biogenesis of c-type cytochromes. Transiently binds heme delivered by CcmC and transfers the heme to apo-cytochromes in a process facilitated by CcmF and CcmH. This is Cytochrome c-type biogenesis protein CcmE from Bradyrhizobium sp. (strain BTAi1 / ATCC BAA-1182).